Consider the following 504-residue polypeptide: L-amino-acid oxidase (504 aa).

The N-terminal stretch at 1-18 is a signal peptide; it reads MNVFFMFSLLFLAALGSC. A disulfide bridge connects residues C28 and C191. Residues 61 to 62, 81 to 82, R89, and 105 to 108 contribute to the FAD site; these read MS, EA, and GPMR. R108 lines the substrate pocket. N-linked (GlcNAc...) asparagine glycosylation is present at N190. H241 is a binding site for substrate. V279 lines the FAD pocket. C349 and C430 are oxidised to a cystine. N-linked (GlcNAc...) asparagine glycosylation is present at N379. Residue Y390 coordinates substrate. FAD is bound by residues E475 and 482–487; that span reads GWIDST. Residue 482-483 participates in substrate binding; sequence GW.

It belongs to the flavin monoamine oxidase family. FIG1 subfamily. In terms of assembly, homodimer; non-covalently linked. FAD serves as cofactor. As to expression, expressed by the venom gland.

It localises to the secreted. The enzyme catalyses an L-alpha-amino acid + O2 + H2O = a 2-oxocarboxylate + H2O2 + NH4(+). The catalysed reaction is L-leucine + O2 + H2O = 4-methyl-2-oxopentanoate + H2O2 + NH4(+). In terms of biological role, catalyzes an oxidative deamination of predominantly hydrophobic and aromatic L-amino acids, thus producing hydrogen peroxide that may contribute to the diverse toxic effects of this enzyme. Shows activity on L-Leu. Exhibits diverse biological activities, such as hemorrhage, hemolysis, edema, antibacterial and antiparasitic activities, as well as regulation of platelet aggregation. Its effect on platelets is controversial, since it either induces aggregation or inhibits agonist-induced aggregation. These different effects are probably due to different experimental conditions. This protein induces apoptosis of cultured HeLa cells. The polypeptide is L-amino-acid oxidase (Gloydius halys (Chinese water mocassin)).